A 930-amino-acid chain; its full sequence is Endoplasmic reticulum aminopeptidase 1 (930 aa).

Over methionine 1 to proline 2 the chain is Cytoplasmic. A helical; Signal-anchor for type II membrane protein transmembrane segment spans residues serine 3–serine 23. Topologically, residues aspartate 24 to leucine 930 are lumenal. N-linked (GlcNAc...) asparagine glycosylation is found at asparagine 59 and asparagine 143. Residues glutamate 172 and glycine 306–asparagine 310 contribute to the substrate site. A Zn(2+)-binding site is contributed by histidine 342. Glutamate 343 is an active-site residue. Residues histidine 346 and glutamate 365 each contribute to the Zn(2+) site. Cysteines 393 and 432 form a disulfide. Residues asparagine 403 and asparagine 655 are each glycosylated (N-linked (GlcNAc...) asparagine). Cysteine 725 and cysteine 732 are oxidised to a cystine. N-linked (GlcNAc...) asparagine glycosylation is found at asparagine 749 and asparagine 890.

Belongs to the peptidase M1 family. In terms of assembly, monomer. May also exist as a heterodimer; with ERAP2. Interacts with RBMX. The cofactor is Zn(2+). In terms of processing, N-glycosylated.

It is found in the endoplasmic reticulum membrane. Functionally, aminopeptidase that plays a central role in peptide trimming, a step required for the generation of most HLA class I-binding peptides. Peptide trimming is essential to customize longer precursor peptides to fit them to the correct length required for presentation on MHC class I molecules. Strongly prefers substrates 9-16 residues long. Rapidly degrades 13-mer to a 9-mer and then stops. Preferentially hydrolyzes the residue Leu and peptides with a hydrophobic C-terminus, while it has weak activity toward peptides with charged C-terminus. May play a role in the inactivation of peptide hormones. May be involved in the regulation of blood pressure through the inactivation of angiotensin II and/or the generation of bradykinin in the kidney. This is Endoplasmic reticulum aminopeptidase 1 (Erap1) from Mus musculus (Mouse).